The following is a 456-amino-acid chain: Serine/threonine-protein kinase meng-po (456 aa).

The tract at residues 15 to 78 (RSFGDGGSTN…RSSIYKKPDK (64 aa)) is disordered. Residues 22-55 (STNSRNSNNNSSTCTNHNNQKRCSTPLTPTSTST) are compositionally biased toward low complexity. The Protein kinase domain occupies 101 to 367 (YNIEKTLAEG…VAKYMKDRWV (267 aa)). Residues 107–115 (LAEGCFAKI) and Lys130 each bind ATP. The Proton acceptor role is filled by Asp221. A Phosphoserine; by PKA modification is found at Ser334.

The protein belongs to the protein kinase superfamily. Ser/Thr protein kinase family. It depends on Mg(2+) as a cofactor. In terms of tissue distribution, expressed in the mushroom bodies (at protein level).

The enzyme catalyses L-seryl-[protein] + ATP = O-phospho-L-seryl-[protein] + ADP + H(+). It carries out the reaction L-threonyl-[protein] + ATP = O-phospho-L-threonyl-[protein] + ADP + H(+). Its activity is regulated as follows. Activated by Pka-C1-mediated phosphorylation of Ser-334. Its function is as follows. Serine/threonine-protein kinase involved in memory formation. Together with the cAMP-dependent protein kinase A Pka-C1, promotes long-term memory (LTM) by regulating CrebB stability and activity. Involved in the maintenance of anesthesia-sensitive memory (ASM) which includes short-term memory (STM) and middle-term memory (MTM). In Drosophila melanogaster (Fruit fly), this protein is Serine/threonine-protein kinase meng-po.